A 147-amino-acid polypeptide reads, in one-letter code: uncharacterized protein (147 aa).

The HTH LytTR-type domain maps to Leu44 to Ile147.

The protein localises to the cytoplasm. This is an uncharacterized protein from Staphylococcus aureus (strain Mu50 / ATCC 700699).